The sequence spans 129 residues: MARKTNTRKRRVRKNIETGIAHIRSTFNNTIVTITDVHGNTIAWSSAGALGFKGSRKSTPFAAQMAAEAAAKASMEHGMKTVEVNVKGPGAGREAAIRALQAAGLEITAIKDVTPIPHNGCRPPKRRRV.

The protein belongs to the universal ribosomal protein uS11 family. Part of the 30S ribosomal subunit. Interacts with proteins S7 and S18. Binds to IF-3.

Its function is as follows. Located on the platform of the 30S subunit, it bridges several disparate RNA helices of the 16S rRNA. Forms part of the Shine-Dalgarno cleft in the 70S ribosome. This chain is Small ribosomal subunit protein uS11, found in Geobacillus sp. (strain WCH70).